The primary structure comprises 285 residues: MFLLTPVLVAVVCILVIWVFKNADRSLEEKKEEARAQPWVDEDLKDNTEHLQVEEDTEEWQESEESVEHILFSHTRYPEQEMRMRSQEFYELLSKRRSIRFISSEPVPMEVIDNVIKAAGTAPSGAHTEPWTFVVVKDPDMKHKIREIIEEEEEINYMKRMGKRWVTDLKKLRTNWIKEYLDTAPVLILIFKQVHGFAVNGKKKVHYYNEISVSIACGILLAALQNAGLVTVTTTPLNCGPRLRVLLGRPSHEKLLVLLPVGYPSRGATVPDLKRKTLDQIMVTV.

The helical transmembrane segment at 1–21 (MFLLTPVLVAVVCILVIWVFK) threads the bilayer. FMN contacts are provided by residues 96-100 (RRSIR) and 124-125 (SG). Residues Ala126, Glu153, Tyr157, and Lys178 each coordinate 3,5-diiodo-L-tyrosine. 3-iodo-L-tyrosine-binding residues include Ala126, Glu153, Tyr157, and Lys178. Residues 233-235 (TTT) and Arg275 each bind FMN.

Belongs to the nitroreductase family. Homodimer. Requires FMN as cofactor.

The protein localises to the cell membrane. The protein resides in the cytoplasmic vesicle membrane. The catalysed reaction is 2 iodide + L-tyrosine + 2 NADP(+) = 3,5-diiodo-L-tyrosine + 2 NADPH + H(+). It carries out the reaction iodide + L-tyrosine + NADP(+) = 3-iodo-L-tyrosine + NADPH. It catalyses the reaction 3-iodo-L-tyrosine + iodide + NADP(+) = 3,5-diiodo-L-tyrosine + NADPH + H(+). The enzyme catalyses L-tyrosine + chloride + NADP(+) = 3-chloro-L-tyrosine + NADPH. The catalysed reaction is bromide + L-tyrosine + NADP(+) = 3-bromo-L-tyrosine + NADPH. In terms of biological role, catalyzes the dehalogenation of halotyrosines such as 3-bromo-L-tyrosine, 3-chloro-L-tyrosine, 3-iodo-L-tyrosine and 3,5-diiodo-L-tyrosine. During thyroid hormone biosynthesis, facilitates iodide salvage by catalysing the oxidative NADPH-dependent deiodination of the halogenated by-products of thyroid hormone production, monoiodotyrosine (L-MIT) and diiodotyrosine (L-DIT). The scavanged iodide can then reenter the hormone-producing pathways. Acts more efficiently on 3-iodo-L-tyrosine than 3,5-diiodo-L-tyrosine. The polypeptide is Iodotyrosine deiodinase 1 (Iyd) (Rattus norvegicus (Rat)).